A 483-amino-acid chain; its full sequence is GTPase Der (483 aa).

EngA-type G domains lie at 3–167 (FTLA…GEER) and 212–387 (LRIA…EIWN). Residues 9–16 (GRPNVGKS), 56–60 (DTAGL), 119–122 (NKAE), 218–225 (GRPNAGKS), 265–269 (DTAGM), and 330–333 (NKWD) contribute to the GTP site. One can recognise a KH-like domain in the interval 388 to 472 (RRISTGRLNR…PIRLSLRTSD (85 aa)).

Belongs to the TRAFAC class TrmE-Era-EngA-EngB-Septin-like GTPase superfamily. EngA (Der) GTPase family. Associates with the 50S ribosomal subunit.

In terms of biological role, GTPase that plays an essential role in the late steps of ribosome biogenesis. The protein is GTPase Der of Brucella melitensis biotype 2 (strain ATCC 23457).